Here is a 108-residue protein sequence, read N- to C-terminus: Glutaredoxin-1 (108 aa).

Residues glutamate 3 to arginine 106 form the Glutaredoxin domain. The cysteines at positions 23 and 26 are disulfide-linked.

It belongs to the glutaredoxin family.

It is found in the virion. In terms of biological role, displays thioltransferase and dehydroascorbate reductase activities. The polypeptide is Glutaredoxin-1 (OPG075) (Cynomys gunnisoni (Gunnison's prairie dog)).